A 398-amino-acid chain; its full sequence is LL-diaminopimelate aminotransferase (398 aa).

Residues Tyr14 and Gly41 each coordinate substrate. Pyridoxal 5'-phosphate is bound by residues Tyr71, 104–105 (AK), Tyr128, Asn174, Tyr205, and 233–235 (SFS). 3 residues coordinate substrate: Lys105, Tyr128, and Asn174. At Lys236 the chain carries N6-(pyridoxal phosphate)lysine. Pyridoxal 5'-phosphate is bound by residues Arg244 and Asn275. Residues Asn275 and Arg368 each contribute to the substrate site.

The protein belongs to the class-I pyridoxal-phosphate-dependent aminotransferase family. LL-diaminopimelate aminotransferase subfamily. In terms of assembly, homodimer. Pyridoxal 5'-phosphate serves as cofactor.

The enzyme catalyses (2S,6S)-2,6-diaminopimelate + 2-oxoglutarate = (S)-2,3,4,5-tetrahydrodipicolinate + L-glutamate + H2O + H(+). It functions in the pathway amino-acid biosynthesis; L-lysine biosynthesis via DAP pathway; LL-2,6-diaminopimelate from (S)-tetrahydrodipicolinate (aminotransferase route): step 1/1. Involved in the synthesis of meso-diaminopimelate (m-DAP or DL-DAP), required for both lysine and peptidoglycan biosynthesis. Catalyzes the direct conversion of tetrahydrodipicolinate to LL-diaminopimelate. This chain is LL-diaminopimelate aminotransferase, found in Chlamydia felis (strain Fe/C-56) (Chlamydophila felis).